The chain runs to 250 residues: Proteasome subunit alpha type-4 (250 aa).

The protein belongs to the peptidase T1A family. The 26S proteasome consists of a 20S proteasome core and two 19S regulatory subunits. The 20S proteasome core is composed of 28 subunits that are arranged in four stacked rings, resulting in a barrel-shaped structure. The two end rings are each formed by seven alpha subunits, and the two central rings are each formed by seven beta subunits. The catalytic chamber with the active sites is on the inside of the barrel.

The protein resides in the cytoplasm. It is found in the nucleus. The proteasome is a multicatalytic proteinase complex which is characterized by its ability to cleave peptides with Arg, Phe, Tyr, Leu, and Glu adjacent to the leaving group at neutral or slightly basic pH. The proteasome has an ATP-dependent proteolytic activity. The chain is Proteasome subunit alpha type-4 (psmA4) from Dictyostelium discoideum (Social amoeba).